The primary structure comprises 310 residues: Vomeronasal type-1 receptor 44 (310 aa).

Over M1–E20 the chain is Extracellular. Residues V21–G41 form a helical membrane-spanning segment. Over E42–L50 the chain is Cytoplasmic. Residues Y51–V71 traverse the membrane as a helical segment. Topologically, residues D72–R93 are extracellular. A disulfide bond links C85 and C172. The chain crosses the membrane as a helical span at residues F94–L114. Topologically, residues S115–H131 are cytoplasmic. The chain crosses the membrane as a helical span at residues I132–V152. Residues S153–A190 lie on the Extracellular side of the membrane. A glycan (N-linked (GlcNAc...) asparagine) is linked at N159. A helical transmembrane segment spans residues I191–L211. Topologically, residues W212–R238 are cytoplasmic. Residues T239–H259 traverse the membrane as a helical segment. Residues S260–S268 are Extracellular-facing. Residues I269 to F289 form a helical membrane-spanning segment. The Cytoplasmic portion of the chain corresponds to I290–I310.

It belongs to the G-protein coupled receptor 1 family.

It localises to the cell membrane. In terms of biological role, putative pheromone receptor implicated in the regulation of social and reproductive behavior. This chain is Vomeronasal type-1 receptor 44 (Vmn1r44), found in Mus musculus (Mouse).